The following is a 108-amino-acid chain: Trp operon repressor homolog (108 aa).

Residues Gln-59–Ser-82 mediate DNA binding.

Belongs to the TrpR family. In terms of assembly, homodimer.

It is found in the cytoplasm. This protein is an aporepressor. When complexed with L-tryptophan it binds the operator region of the trp operon and prevents the initiation of transcription. The chain is Trp operon repressor homolog from Aliivibrio fischeri (strain MJ11) (Vibrio fischeri).